The sequence spans 458 residues: N-acetylgalactosamine kinase (458 aa).

Residues Arg-43, Glu-49, His-50, and Asp-52 each contribute to the alpha-D-galactose site. Positions 143, 145, and 146 each coordinate ATP. Asp-190 serves as a coordination point for alpha-D-galactose. Asp-190 functions as the Proton acceptor in the catalytic mechanism. ATP is bound by residues Asn-233 and Lys-234.

Belongs to the GHMP kinase family. GalK subfamily. As to quaternary structure, monomer.

It catalyses the reaction N-acetyl-alpha-D-galactosamine + ATP = N-acetyl-alpha-D-galactosamine 1-phosphate + ADP + H(+). Acts on GalNAc. Also acts as a galactokinase when galactose is present at high concentrations. This chain is N-acetylgalactosamine kinase (GALK2), found in Pongo abelii (Sumatran orangutan).